We begin with the raw amino-acid sequence, 220 residues long: Deoxyribose-phosphate aldolase (220 aa).

D89 functions as the Proton donor/acceptor in the catalytic mechanism. K151 acts as the Schiff-base intermediate with acetaldehyde in catalysis. K180 functions as the Proton donor/acceptor in the catalytic mechanism.

The protein belongs to the DeoC/FbaB aldolase family. DeoC type 1 subfamily.

It is found in the cytoplasm. The enzyme catalyses 2-deoxy-D-ribose 5-phosphate = D-glyceraldehyde 3-phosphate + acetaldehyde. It participates in carbohydrate degradation; 2-deoxy-D-ribose 1-phosphate degradation; D-glyceraldehyde 3-phosphate and acetaldehyde from 2-deoxy-alpha-D-ribose 1-phosphate: step 2/2. Catalyzes a reversible aldol reaction between acetaldehyde and D-glyceraldehyde 3-phosphate to generate 2-deoxy-D-ribose 5-phosphate. The sequence is that of Deoxyribose-phosphate aldolase from Deinococcus radiodurans (strain ATCC 13939 / DSM 20539 / JCM 16871 / CCUG 27074 / LMG 4051 / NBRC 15346 / NCIMB 9279 / VKM B-1422 / R1).